Here is a 369-residue protein sequence, read N- to C-terminus: MFAPLQNDTFLRACLRQATDYTPVWLMRQAGRYLPEYRATRARAGSFMGLATNTDYATEVTLQPLERYPLDAAILFSDILTVPDAMGLGLSFALGEGPRFATPVRDEAAVARLEVPDMGKLRYVFDAVTSIRKALNGRVPLIGFSGSPWTLACYMVEGAGSDDYRLVKTMLYQRPDLMHKMLAVNADAVAAYLNAQIEAGAQAVMIFDSWGGVLADAAFQTFSLAYTARVLGQLKREHDGVKIPRLVFTKGGGQWLQAMAALDCEVLGLDWTVNLAQARARVGENGPHAKALQGNLDPNVLFASPAQIETEVAAVLDSFGRPHLDSSQPGPTHIFNLGHGISQHTPPESVEVLVNAVHTHSRSMRAVRT.

Substrate-binding positions include 28 to 32 (RQAGR), Asp78, Tyr154, Ser209, and His339.

This sequence belongs to the uroporphyrinogen decarboxylase family. As to quaternary structure, homodimer.

The protein resides in the cytoplasm. The catalysed reaction is uroporphyrinogen III + 4 H(+) = coproporphyrinogen III + 4 CO2. It functions in the pathway porphyrin-containing compound metabolism; protoporphyrin-IX biosynthesis; coproporphyrinogen-III from 5-aminolevulinate: step 4/4. Its function is as follows. Catalyzes the decarboxylation of four acetate groups of uroporphyrinogen-III to yield coproporphyrinogen-III. This chain is Uroporphyrinogen decarboxylase, found in Polaromonas sp. (strain JS666 / ATCC BAA-500).